A 644-amino-acid chain; its full sequence is Chaperone protein HscA (644 aa).

The protein belongs to the heat shock protein 70 family.

Functionally, chaperone involved in the maturation of iron-sulfur cluster-containing proteins. Has a low intrinsic ATPase activity which is markedly stimulated by HscB. Involved in the maturation of IscU. The protein is Chaperone protein HscA of Yersinia pseudotuberculosis serotype I (strain IP32953).